We begin with the raw amino-acid sequence, 462 residues long: Elongation factor 1-alpha 1 (462 aa).

Position 2 is a n,N,N-trimethylglycine (Gly2). In terms of domain architecture, tr-type G spans Lys5 to Thr242. The tract at residues Gly14–Ser21 is G1. Gly14–Ser21 lines the GTP pocket. Lys36 bears the N6,N6,N6-trimethyllysine; alternate mark. At Lys36 the chain carries N6,N6-dimethyllysine; alternate. Lys36 is modified (N6-methyllysine; alternate). N6,N6-dimethyllysine is present on Lys55. The tract at residues Gly70–Asp74 is G2. Residue Lys79 is modified to N6,N6,N6-trimethyllysine; by EEF1AKMT1. Residues Asp91 to Gly94 form a G3 region. Residue Asn153–Asp156 participates in GTP binding. The tract at residues Asn153–Asp156 is G4. The residue at position 165 (Lys165) is an N6,N6,N6-trimethyllysine; alternate; by EEF1AKMT3. Lys165 is modified (N6,N6-dimethyllysine; alternate; by EEF1AKMT3). At Lys165 the chain carries N6-acetyllysine; alternate. Lys165 carries the N6-methyllysine; alternate; by EEF1AKMT3 modification. Lys172 is subject to N6-acetyllysine. Residue Ser194–Trp196 participates in GTP binding. Residues Ser194–Trp196 are G5. The residue at position 273 (Lys273) is an N6-acetyllysine. Ser300 is subject to Phosphoserine; by TGFBR1. At Glu301 the chain carries 5-glutamyl glycerylphosphorylethanolamine. An N6,N6,N6-trimethyllysine; by EEF1AKMT2 modification is found at Lys318. Glu374 is subject to 5-glutamyl glycerylphosphorylethanolamine. Lys385 participates in a covalent cross-link: Glycyl lysine isopeptide (Lys-Gly) (interchain with G-Cter in ubiquitin). Lys392 carries the N6-acetyllysine; alternate modification. Lys392 is modified (N6-succinyllysine; alternate). A Phosphothreonine; by PASK modification is found at Thr432. Residue Lys439 is modified to N6-acetyllysine.

It belongs to the TRAFAC class translation factor GTPase superfamily. Classic translation factor GTPase family. EF-Tu/EF-1A subfamily. Found in a nuclear export complex with XPO5, EEF1A1, Ran and aminoacylated tRNA. Interacts with PARP1 and TXK. Interacts with KARS1. May interact with ERGIC2. Interacts with IFIT1 (via TPR repeats 4-7). Interacts with DLC1, facilitating distribution to the membrane periphery and ruffles upon growth factor stimulation. Interacts with ZPR1; the interaction occurs in a epidermal growth factor (EGF)-dependent manner. Interacts with PPP1R16B. Interacts with SPHK1 and SPHK2; both interactions increase SPHK1 and SPHK2 kinase activity. Interacts with guanyl-nucleotide exchange factor EEF1B2. Interacts (via middle-region) with HTATIP2 (via N-terminus); the interaction is direct and competes with EEF1A1 binding to guanyl-nucleotide exchange factor EEF1B2, thereby inhibiting GDP for GTP exchange and reactivation of EEF1A1. Interacts with tRNA. In terms of processing, ISGylated. Post-translationally, phosphorylated by TXK. Phosphorylation by PASK increases translation efficiency. Phosphorylated by ROCK2. Phosphorylation by TGFBR1 inhibits translation elongation. Trimethylated at Lys-79 by EEF1AKMT1. Methylated at Lys-165 by EEF1AKMT3, methylation by EEF1AKMT3 is dynamic as well as inducible by stress conditions, such as ER-stress, and plays a regulatory role on mRNA translation. Trimethylated at Lys-318 by EEF1AKMT2. Mono-, di-, and trimethylated at Lys-36 by EEF1AKMT4; trimethylated form is predominant. Methylation by EEF1AKMT4 contributes to the fine-tuning of translation rates for a subset of tRNAs. Trimethylated at Gly-2 by METTL13. Mono- and dimethylated at Lys-55 by METTL13; dimethylated form is predominant. In terms of processing, ubiquitinated at Lys-385 by RNF14 in response to ribosome collisions (ribosome stalling), leading to its degradation by the proteasome and rescue of stalled ribosomes.

Its subcellular location is the cytoplasm. The protein resides in the nucleus. It localises to the nucleolus. It is found in the cell membrane. The enzyme catalyses GTP + H2O = GDP + phosphate + H(+). Functionally, translation elongation factor that catalyzes the GTP-dependent binding of aminoacyl-tRNA (aa-tRNA) to the A-site of ribosomes during the elongation phase of protein synthesis. Base pairing between the mRNA codon and the aa-tRNA anticodon promotes GTP hydrolysis, releasing the aa-tRNA from EEF1A1 and allowing its accommodation into the ribosome. The growing protein chain is subsequently transferred from the P-site peptidyl tRNA to the A-site aa-tRNA, extending it by one amino acid through ribosome-catalyzed peptide bond formation. Also plays a role in the positive regulation of IFNG transcription in T-helper 1 cells as part of an IFNG promoter-binding complex with TXK and PARP1. Also plays a role in cytoskeleton organization by promoting actin bundling. The sequence is that of Elongation factor 1-alpha 1 (EEF1A1) from Cricetulus griseus (Chinese hamster).